The sequence spans 98 residues: Co-chaperonin GroES 5 (98 aa).

This sequence belongs to the GroES chaperonin family. As to quaternary structure, heptamer of 7 subunits arranged in a ring. Interacts with the chaperonin GroEL.

The protein resides in the cytoplasm. Its function is as follows. Together with the chaperonin GroEL, plays an essential role in assisting protein folding. The GroEL-GroES system forms a nano-cage that allows encapsulation of the non-native substrate proteins and provides a physical environment optimized to promote and accelerate protein folding. GroES binds to the apical surface of the GroEL ring, thereby capping the opening of the GroEL channel. The protein is Co-chaperonin GroES 5 of Mesorhizobium japonicum (strain LMG 29417 / CECT 9101 / MAFF 303099) (Mesorhizobium loti (strain MAFF 303099)).